The primary structure comprises 51 residues: Large ribosomal subunit protein bL33 (51 aa).

The tract at residues 1–23 is disordered; that stretch reads MREKIKLESSAGTGHFYTTTKNK. Positions 10–20 are enriched in polar residues; sequence SAGTGHFYTTT.

This sequence belongs to the bacterial ribosomal protein bL33 family.

The protein is Large ribosomal subunit protein bL33 of Nitrosomonas eutropha (strain DSM 101675 / C91 / Nm57).